Here is a 171-residue protein sequence, read N- to C-terminus: Ribosome maturation factor RimM (171 aa).

One can recognise a PRC barrel domain in the interval 94–168 (NDEFYKDELI…MTIVPPEIVG (75 aa)).

Belongs to the RimM family. Binds ribosomal protein uS19.

Its subcellular location is the cytoplasm. An accessory protein needed during the final step in the assembly of 30S ribosomal subunit, possibly for assembly of the head region. Essential for efficient processing of 16S rRNA. May be needed both before and after RbfA during the maturation of 16S rRNA. It has affinity for free ribosomal 30S subunits but not for 70S ribosomes. In Anaplasma phagocytophilum (strain HZ), this protein is Ribosome maturation factor RimM.